The sequence spans 581 residues: Potassium-transporting ATPase potassium-binding subunit (581 aa).

Transmembrane regions (helical) follow at residues 2–22 (LQGW…TPFF), 74–94 (AVIA…PLNP), 135–155 (GLGY…IAFI), 177–197 (ILLP…VPET), 255–275 (LVQL…YGVF), 284–304 (LIYL…AIGE), 332–352 (WAQS…AVIA), 357–377 (LMPN…VFGG), 381–401 (GTAY…LMVG), 421–441 (FLIL…ALAF), 501–521 (LSAC…LLLL), and 550–570 (AGVI…LGPI).

Belongs to the KdpA family. In terms of assembly, the system is composed of three essential subunits: KdpA, KdpB and KdpC.

The protein resides in the cell inner membrane. In terms of biological role, part of the high-affinity ATP-driven potassium transport (or Kdp) system, which catalyzes the hydrolysis of ATP coupled with the electrogenic transport of potassium into the cytoplasm. This subunit binds the periplasmic potassium ions and delivers the ions to the membrane domain of KdpB through an intramembrane tunnel. The polypeptide is Potassium-transporting ATPase potassium-binding subunit (Microcystis aeruginosa (strain NIES-843 / IAM M-2473)).